Consider the following 103-residue polypeptide: Colicin-V (103 aa).

Positions 1–15 (MRTLTLNELDSVSGG) are excised as a propeptide. Residues C91 and C102 are joined by a disulfide bond.

It is found in the secreted. In terms of biological role, colicin V kills sensitive cells by disrupting the membrane potential. Functionally, colicins are polypeptide toxins produced by, and active against E.coli and closely related bacteria. This Escherichia coli protein is Colicin-V (cvaC).